The sequence spans 130 residues: uncharacterized protein (130 aa).

The segment at 76 to 102 (RKCKNGPSPNKRGSASGCSRRGGGRGS) is disordered.

This is an uncharacterized protein from Saccharomyces cerevisiae (strain ATCC 204508 / S288c) (Baker's yeast).